Here is a 202-residue protein sequence, read N- to C-terminus: Glycerol-3-phosphate acyltransferase (202 aa).

5 helical membrane-spanning segments follow: residues Leu-6–Val-26, Ser-56–Phe-76, Ser-82–Phe-102, Ala-118–Ile-138, and Tyr-141–Asp-161.

This sequence belongs to the PlsY family. As to quaternary structure, probably interacts with PlsX.

It is found in the cell inner membrane. It catalyses the reaction an acyl phosphate + sn-glycerol 3-phosphate = a 1-acyl-sn-glycero-3-phosphate + phosphate. It functions in the pathway lipid metabolism; phospholipid metabolism. Its function is as follows. Catalyzes the transfer of an acyl group from acyl-phosphate (acyl-PO(4)) to glycerol-3-phosphate (G3P) to form lysophosphatidic acid (LPA). This enzyme utilizes acyl-phosphate as fatty acyl donor, but not acyl-CoA or acyl-ACP. The chain is Glycerol-3-phosphate acyltransferase from Shewanella woodyi (strain ATCC 51908 / MS32).